We begin with the raw amino-acid sequence, 284 residues long: Shikimate dehydrogenase (NADP(+)) (284 aa).

Shikimate-binding positions include 20–22 and Ser-67; that span reads SIS. The active-site Proton acceptor is the Lys-71. 2 residues coordinate shikimate: Asn-92 and Asp-107. Residues 129 to 133 and Val-227 contribute to the NADP(+) site; that span reads GAGGA. Tyr-229 contributes to the shikimate binding site. NADP(+) is bound at residue Gly-250.

This sequence belongs to the shikimate dehydrogenase family. In terms of assembly, homodimer.

It carries out the reaction shikimate + NADP(+) = 3-dehydroshikimate + NADPH + H(+). Its pathway is metabolic intermediate biosynthesis; chorismate biosynthesis; chorismate from D-erythrose 4-phosphate and phosphoenolpyruvate: step 4/7. Its function is as follows. Involved in the biosynthesis of the chorismate, which leads to the biosynthesis of aromatic amino acids. Catalyzes the reversible NADPH linked reduction of 3-dehydroshikimate (DHSA) to yield shikimate (SA). The sequence is that of Shikimate dehydrogenase (NADP(+)) from Streptococcus sanguinis (strain SK36).